We begin with the raw amino-acid sequence, 632 residues long: Probable potassium transport system protein Kup (632 aa).

The next 12 membrane-spanning stretches (helical) occupy residues 19–39 (LLCLAALGVVYGDIGTSPLYV), 57–77 (VIGIISLIFWTIMIVVSLKYV), 111–131 (ILFLIGAFGAALFFGDGVITP), 147–167 (PLLQPYVLPITVVVLIALFML), 175–195 (IGALFGPVMVIWFVSLGLVGL), 213–233 (AFAFCISNGWLAFIALGAVVL), 257–277 (WYGGVLPALTLNYLGQGALLL), 286–306 (PFFLLFPSWALYGAVGLATAA), 347–367 (IYIPFVNWTLLSVVLMAVLGF), 376–396 (AYGVAVTTTMVIETTLTFFVL), 404–424 (FLLGILVTAFFLAIDSAFFSA), and 429–449 (VAQGGWFPLVIGSVIFFIMIT).

The protein belongs to the HAK/KUP transporter (TC 2.A.72) family.

It localises to the cell inner membrane. It carries out the reaction K(+)(in) + H(+)(in) = K(+)(out) + H(+)(out). In terms of biological role, transport of potassium into the cell. Likely operates as a K(+):H(+) symporter. This Nitrosospira multiformis (strain ATCC 25196 / NCIMB 11849 / C 71) protein is Probable potassium transport system protein Kup.